Here is a 180-residue protein sequence, read N- to C-terminus: ATP-dependent protease subunit HslV (180 aa).

Residue threonine 8 is part of the active site. 3 residues coordinate Na(+): glycine 165, aspartate 168, and threonine 171.

It belongs to the peptidase T1B family. HslV subfamily. In terms of assembly, a double ring-shaped homohexamer of HslV is capped on each side by a ring-shaped HslU homohexamer. The assembly of the HslU/HslV complex is dependent on binding of ATP.

It is found in the cytoplasm. The enzyme catalyses ATP-dependent cleavage of peptide bonds with broad specificity.. Its activity is regulated as follows. Allosterically activated by HslU binding. In terms of biological role, protease subunit of a proteasome-like degradation complex believed to be a general protein degrading machinery. The polypeptide is ATP-dependent protease subunit HslV (Lactiplantibacillus plantarum (strain ATCC BAA-793 / NCIMB 8826 / WCFS1) (Lactobacillus plantarum)).